Here is a 1128-residue protein sequence, read N- to C-terminus: Glutamate receptor-interacting protein 1 (1128 aa).

Phosphoserine is present on Ser43. 6 consecutive PDZ domains span residues 53–136 (VVEL…EYEL), 150–238 (TVEV…EYDV), 252–336 (LVEV…LPHH), 472–561 (EVVL…EFDV), 573–658 (HVKL…RKDE), and 673–755 (TVEL…KKQT). Disordered regions lie at residues 754 to 798 (QTDA…YPST) and 935 to 981 (MSLN…GRKS). A compositionally biased stretch (polar residues) spans 944-974 (PRSQLGRQASFQERSSSRPHYSQTTRSNTLP). The PDZ 7 domain maps to 1004–1086 (KVTLYKDSDM…KLDLVISRNP (83 aa)). Residues 1093-1115 (IDQQSLPGDWSEQNSAFFQQPSH) are compositionally biased toward polar residues. Residues 1093 to 1128 (IDQQSLPGDWSEQNSAFFQQPSHGGNLETREPTNTL) are disordered.

Interacts with EPHA7, EPHB2, KIF5A, KIF5B, KIF5C, GRIA2, GRIA3, GRIPAP1/GRASP1, PPFIA1, PPFIA4, FRAS1, PLCD4, PTPRF and liprins-alpha. Can form homomultimers or heteromultimers with GRIP2. Forms a ternary complex with GRIA2 and CSPG4. Interacts with ATAD1 in an ATP-dependent manner. ATAD1-catalyzed ATP hydrolysis disrupts binding to ATAD1 and to GRIA2 and leads to AMPAR complex disassembly. Interacts with EFNB1, EFNB3 and the C-terminal tail of PRLHR. Interacts with SLC30A9. Interacts with BUD23. Forms a complex with NSG1, GRIA2 and STX12; controls the intracellular fate of AMPAR and the endosomal sorting of the GRIA2 subunit toward recycling and membrane targeting. Interacts with NSG1.

It is found in the cytoplasmic vesicle. The protein resides in the perikaryon. The protein localises to the cell projection. It localises to the dendrite. Its subcellular location is the cytoplasm. It is found in the endomembrane system. The protein resides in the postsynaptic cell membrane. The protein localises to the postsynaptic density. It localises to the endoplasmic reticulum membrane. Its function is as follows. May play a role as a localized scaffold for the assembly of a multiprotein signaling complex and as mediator of the trafficking of its binding partners at specific subcellular location in neurons. Through complex formation with NSG1, GRIA2 and STX12 controls the intracellular fate of AMPAR and the endosomal sorting of the GRIA2 subunit toward recycling and membrane targeting. The chain is Glutamate receptor-interacting protein 1 (GRIP1) from Homo sapiens (Human).